A 249-amino-acid chain; its full sequence is tRNA (guanine-N(7)-)-methyltransferase (249 aa).

Positions 80, 105, 132, and 155 each coordinate S-adenosyl-L-methionine. Asp-155 is a catalytic residue. Substrate is bound by residues Lys-159, Asp-191, and 228 to 231 (TKFE).

The protein belongs to the class I-like SAM-binding methyltransferase superfamily. TrmB family.

It carries out the reaction guanosine(46) in tRNA + S-adenosyl-L-methionine = N(7)-methylguanosine(46) in tRNA + S-adenosyl-L-homocysteine. It functions in the pathway tRNA modification; N(7)-methylguanine-tRNA biosynthesis. Catalyzes the formation of N(7)-methylguanine at position 46 (m7G46) in tRNA. This is tRNA (guanine-N(7)-)-methyltransferase from Mannheimia succiniciproducens (strain KCTC 0769BP / MBEL55E).